We begin with the raw amino-acid sequence, 208 residues long: UPF0637 protein lp_2332 (208 aa).

Belongs to the UPF0637 family.

The chain is UPF0637 protein lp_2332 from Lactiplantibacillus plantarum (strain ATCC BAA-793 / NCIMB 8826 / WCFS1) (Lactobacillus plantarum).